The primary structure comprises 162 residues: MQKEPMLEETYRKLSEELEQLKSVERGVIAKVIDEARELGDLKENAEYHAAKDKQGLMEARIAELTDVVGRAQVVDPSTFSHDRVSFGSTVVLVDQDTDEEVRYTIVGGQESNPQSGLISIQSPMARVLIGKEEGDEVELTLPSGKKTYDIEEILYEEITLG.

The stretch at 1-28 (MQKEPMLEETYRKLSEELEQLKSVERGV) forms a coiled coil.

It belongs to the GreA/GreB family.

Functionally, necessary for efficient RNA polymerase transcription elongation past template-encoded arresting sites. The arresting sites in DNA have the property of trapping a certain fraction of elongating RNA polymerases that pass through, resulting in locked ternary complexes. Cleavage of the nascent transcript by cleavage factors such as GreA or GreB allows the resumption of elongation from the new 3'terminus. GreA releases sequences of 2 to 3 nucleotides. The chain is Transcription elongation factor GreA from Sulfurovum sp. (strain NBC37-1).